The chain runs to 506 residues: MTDQSPAPTAQDENRLIAERRAKLARLRETGVAFPNDFVPDAHAADLHARYDGLDQEALTAAAVTVKVAGRMMLKRVMGKASFATLQDGSGRIQIYLERGTLGEEAYAAFKQWDIGDIIAIEGPVFKTNKGELSVHANSARLLSKSLRPLPDKFHGVADQELRYRQRYVDLIMTDATRRTFEARSKAVGGIRQAMLNAGFFEVETPMLHPIPGGAAAKPFVTHHNALDMQMFLRIAPELYLKRLIVGGFERVFEINRNFRNEGVSPRHNPEFTMMEFYAAYADYRWLMDFTEDLIRQAAIAATGSAVLSYQDRELDLSQPFDHLTICEAILKYAEGYTQAQLDDPAFVRAELRKLGANVEGPPLARAGLGALQLALFEETAEARLWRPTYIIDYPVEVSPLARASDTRDGITERFELFITGREIANGFSELNDPEDQAERFRAQVEAKDAGDEEAMYFDADYIRALEYGMPPTGGCGIGIDRLVMLLTDSPSIRDVILFPHLRRED.

Residues Glu416 and Glu423 each contribute to the Mg(2+) site.

It belongs to the class-II aminoacyl-tRNA synthetase family. Homodimer. Mg(2+) serves as cofactor.

It is found in the cytoplasm. It carries out the reaction tRNA(Lys) + L-lysine + ATP = L-lysyl-tRNA(Lys) + AMP + diphosphate. This Bordetella parapertussis (strain 12822 / ATCC BAA-587 / NCTC 13253) protein is Lysine--tRNA ligase.